A 469-amino-acid polypeptide reads, in one-letter code: 3-isopropylmalate dehydratase large subunit (469 aa).

3 residues coordinate [4Fe-4S] cluster: C350, C410, and C413.

The protein belongs to the aconitase/IPM isomerase family. LeuC type 1 subfamily. As to quaternary structure, heterodimer of LeuC and LeuD. Requires [4Fe-4S] cluster as cofactor.

The enzyme catalyses (2R,3S)-3-isopropylmalate = (2S)-2-isopropylmalate. Its pathway is amino-acid biosynthesis; L-leucine biosynthesis; L-leucine from 3-methyl-2-oxobutanoate: step 2/4. In terms of biological role, catalyzes the isomerization between 2-isopropylmalate and 3-isopropylmalate, via the formation of 2-isopropylmaleate. The chain is 3-isopropylmalate dehydratase large subunit from Rhizobium etli (strain ATCC 51251 / DSM 11541 / JCM 21823 / NBRC 15573 / CFN 42).